The primary structure comprises 412 residues: Phosphate-repressible acid phosphatase (412 aa).

Residues 1 to 19 (MLTKQTLLAFVGALALATG) form the signal peptide. N-linked (GlcNAc...) asparagine glycans are attached at residues N74, N121, N186, and N208. The active-site Proton donor is the D215. Residues N217, N332, and N343 are each glycosylated (N-linked (GlcNAc...) asparagine).

The N-terminus is blocked.

The protein localises to the secreted. The catalysed reaction is a phosphate monoester + H2O = an alcohol + phosphate. In Penicillium chrysogenum (Penicillium notatum), this protein is Phosphate-repressible acid phosphatase (PHOA).